The following is a 425-amino-acid chain: Protein CLP1 homolog (425 aa).

Residues Glu-18, Lys-59, and 121–126 (DVGKST) contribute to the ATP site.

Belongs to the Clp1 family. Clp1 subfamily.

It is found in the nucleus. Required for endonucleolytic cleavage during polyadenylation-dependent pre-mRNA 3'-end formation. This Drosophila pseudoobscura pseudoobscura (Fruit fly) protein is Protein CLP1 homolog (cbc).